Here is an 89-residue protein sequence, read N- to C-terminus: Small ribosomal subunit protein uS15 (89 aa).

Positions 1–25 (MSLSAEQKGEIVKKHARTASDTGSP) are disordered.

Belongs to the universal ribosomal protein uS15 family. In terms of assembly, part of the 30S ribosomal subunit. Forms a bridge to the 50S subunit in the 70S ribosome, contacting the 23S rRNA.

Its function is as follows. One of the primary rRNA binding proteins, it binds directly to 16S rRNA where it helps nucleate assembly of the platform of the 30S subunit by binding and bridging several RNA helices of the 16S rRNA. Functionally, forms an intersubunit bridge (bridge B4) with the 23S rRNA of the 50S subunit in the ribosome. In Alkalilimnicola ehrlichii (strain ATCC BAA-1101 / DSM 17681 / MLHE-1), this protein is Small ribosomal subunit protein uS15.